The primary structure comprises 1024 residues: MARHGPPWSRLDAQQERDVRELVRGVAGLQDEADPNFQLALNFAWSNFRFHRFLDVNSHKIEKTIEGIYEKFVIHSDLSKAASWKRLTEEFLNAPLPSIKEIKTDAHYSILSLLLCLSDSPSNSSYVETPRNKEVEKKDDFDWGKYLMEDEEMDIGPYMDTPNWSEESEEENDQQPLSREDSGIQVDRTPLEEQDQNRKLDPCISWKDEPDDRSWLEHHVVHQYWTARPSQFPHSLHLHSNLAAVWDQHLYSSDPLYVPDDRVLVTETQVIRETLWLLSGVKKLFIFQLIDGKVTVRNNIIVTHLTHSCLRSVLEQIAAYGQVVFRLQEFIDEVMGHSSESMLPGSGSVPKKSTEAPFRTYQAFMWALYKYFISFKEELAEIEKCIINNDTTITLAIVVDKLAPRLSQLKVLHKVFSTGVAEVPPDTRNVVRASHLLNTLYKAILEYDNVGEASEQTVSLLFSLWVETVRPYLQTVDEWIVHGHLWDGAREFIIQRNKNVPVNHRDFWYATYTLYSVSEKTENEEKMSDNASASSGSDQGPSSRQHTMVSFLKPVLKQIIMAGKSMQLLKNLQCAESTTCQAGARDAERKSLYTLFLESVQSRLRHGEDSTPQVLTEQQATKENLMKMQSIAESHLELDDVHDPLLAINFARMYLEQSDFHEKFAGGDVCVDRSSESVTCQTFELTLRSCLYPHIDKQYLDCCGNLMQTLKKDYRLVEYLQAMRNFFLMEGGDTMYDFYTSIFDKIREKETWQNVSFLNVQLQEAVGQRYPEDSSRLSISFENVDTAKKKLPVHILDGLTLSYKVPWPVDIVISLECQKIYNQVFLLLLQIKWAKYSLDVLLFGELVSTAEKPRLKEGLIHEQDTVAQFGPQKEPVRQQIHRMFLLRVKLMHFVNSLHNYIMTRILHSTGLEFQHQVEEAKDLDQLIKIHYRYLSTIHDRCLLREKVSFVKEAIMKVLNLALMFADGWQAGLGTWRMESIEKMESDFKNCHMFLVTILNKAVCRGSFPHLESLALSLMAGMEQS.

Disordered regions lie at residues 155-203 (IGPY…LDPC) and 521-545 (TENE…SSRQ). Basic and acidic residues predominate over residues 189 to 203 (TPLEEQDQNRKLDPC). A compositionally biased stretch (low complexity) spans 531 to 543 (ASASSGSDQGPSS).

The protein belongs to the TUBGCP family. Component of the gamma-tubulin ring complex (gTuRC) consisting of TUBGCP2, TUBGCP3, TUBGCP4, TUBGCP5 and TUBGCP6 and gamma-tubulin TUBG1 or TUBG2. TUBGCP2, TUBGCP3, TUBGCP4, TUBGCP5 and TUBGCP6 assemble in a 5:5:2:1:1 stoichiometry; each is associated with a gamma-tubulin, thereby arranging 14 gamma-tubulins in a helical manner. Gamma-tubulin at the first position is blocked by TUBGCP3 at the last position, allowing 13 protafilaments to grow into a microtubule. The gTuRC (via TUBGCP3 and TUBGCP6) interacts with ACTB and MZT1; the interactions form a luminal bridge that stabilizes the initial structure during complex assembly. The gTuRC (via TUBGCP2) interacts with MZT2A/MZT2B and CDK5RAP2 (via CM1 motif); the interactions play a role in gTuRC activation. As to expression, widely expressed, with highest levels in heart and skeletal muscle and moderate levels in brain.

The protein resides in the cytoplasm. The protein localises to the cytoskeleton. It localises to the microtubule organizing center. Its subcellular location is the centrosome. In terms of biological role, component of the gamma-tubulin ring complex (gTuRC) which mediates microtubule nucleation. The gTuRC regulates the minus-end nucleation of alpha-beta tubulin heterodimers that grow into microtubule protafilaments, a critical step in centrosome duplication and spindle formation. The polypeptide is Gamma-tubulin complex component 5 (TUBGCP5) (Homo sapiens (Human)).